A 271-amino-acid polypeptide reads, in one-letter code: Probable protein VP2 (271 aa).

3 disordered regions span residues 49–103 (GGPP…DAAA), 124–146 (QCSNRRSKTRARRTDGPPTPIDT), and 203–271 (LQQR…RVST). Residues 50–61 (GPPPPGGPPPGT) are compositionally biased toward pro residues. Residues 87-99 (GEGGAAGPPGAGG) show a composition bias toward gly residues. Basic and acidic residues predominate over residues 207–216 (QQRESSESPK). The segment covering 217–238 (KAHIQRKKGRKPLQKSRRRRRQ) has biased composition (basic residues). The span at 239–259 (YSSSSDDSESSGSSSSSSNSS) shows a compositional bias: low complexity.

Post-translationally, phosphorylated at C-terminal serines.

This is Probable protein VP2 from Torque teno virus (isolate Human/Japan/SANBAN/1999) (TTV).